A 415-amino-acid polypeptide reads, in one-letter code: Probable tRNA pseudouridine synthase D (415 aa).

The Nucleophile role is filled by aspartate 83. The 221-residue stretch at 158–378 (GFPNYFGYQR…PGRRRELLIR (221 aa)) folds into the TRUD domain.

This sequence belongs to the pseudouridine synthase TruD family.

It catalyses the reaction uridine(13) in tRNA = pseudouridine(13) in tRNA. Could be responsible for synthesis of pseudouridine from uracil-13 in transfer RNAs. The protein is Probable tRNA pseudouridine synthase D of Thermococcus gammatolerans (strain DSM 15229 / JCM 11827 / EJ3).